The following is a 69-amino-acid chain: Regulatory protein MokC (69 aa).

Residues K24–T44 form a helical membrane-spanning segment.

This sequence belongs to the Hok/Gef family.

The protein resides in the cell inner membrane. In terms of biological role, might be the toxic component of a type I toxin-antitoxin (TA) system. Regulatory peptide which completely overlaps hokC and enables hokC expression. The polypeptide is Regulatory protein MokC (mokC) (Escherichia coli (strain K12)).